A 317-amino-acid chain; its full sequence is Methyltransferase CPUR_05424 (317 aa).

The tract at residues 57–149 (DVGAGNGPYA…QLRPGGTFAC (93 aa)) is methyltransferase domain.

The protein belongs to the methyltransferase superfamily.

It participates in pigment biosynthesis. In terms of biological role, methyltransferase; part of the ergochrome gene cluster responsible for the typical purple-black color of the ergot sclerotia. The ergochrome gene cluster produces several ergot pigments including the yellow ergochrome secalonic acid and its derivatives, as well as the red anthraquinones endocrocin and clavorubin. The pathway begins with the synthesis of atrochrysone thioester by the polyketide synthase (PKS) CPUR_05437. The atrochrysone carboxyl ACP thioesterase CPUR_05436 then breaks the thioester bond and releases the atrochrysone carboxylic acid from CPUR_05437. The atrochrysone carboxylic acid is then converted to atrochrysone which is further transformed into emodin anthrone. The next step is performed by the anthrone oxygenase CPUR_05434 that catalyzes the oxidation of emodinanthrone to emodin. Emodin is further modified to yield monodictyphenone via several steps involving CPUR_05427, CPUR_05428, CPUR_05429 and CPUR_05430. The short chain dehydrogenase/reductase CPUR_05418 then catalyzes the C-5 ketoreduction to give the xanthone skeleton of the monomeric units. Ergochromes formation requires further dimerization steps of different xanthone units, probably catalyzed by the cytochrome P450 monooxygenase CPUR_05419. CPUR_05425, CPUR_05426 and CPUR_05431 are unique to Claviceps, thus it is likely that they are involved in further modification of xanthone units or in their dimerization. The yellow ergochromes and the red anthraquinone pigments endocrocin and clavorubin are products from the same PKS derived precursors and the latter are likely shunt products in the pathway of xanthone biosynthesis. It is proposed that atrochrysone carboxylic acid released from the PKS CPUR_05437 can also be converted to endocrocin anthrone which is further oxidized into endocrocin by CPUR_05435. Endocrocin could be then modified to clavorubin, possibly by CPUR_05423 and CPUR_05431. Clavorubin is the principal anthraquinone metabolite produced by the cluster with a much higher yield compared to endocrocin. The sequence is that of Methyltransferase CPUR_05424 from Claviceps purpurea (strain 20.1) (Ergot fungus).